Here is a 348-residue protein sequence, read N- to C-terminus: Heat-inducible transcription repressor HrcA (348 aa).

This sequence belongs to the HrcA family.

Functionally, negative regulator of class I heat shock genes (grpE-dnaK-dnaJ and groELS operons). Prevents heat-shock induction of these operons. This is Heat-inducible transcription repressor HrcA from Ruminiclostridium cellulolyticum (strain ATCC 35319 / DSM 5812 / JCM 6584 / H10) (Clostridium cellulolyticum).